Consider the following 502-residue polypeptide: Sodium/proline symporter (502 aa).

The Periplasmic portion of the chain corresponds to 1–5 (MAIST). Residues 6 to 26 (PMLVTFCVYIFGMILIGFIAW) traverse the membrane as a helical segment. The Cytoplasmic segment spans residues 27–41 (RSTKNFDDYILGGRS). Hydrophilic regions lie at residues 27 to 66 (RSTKNFDDYILGGRSLGPFVTALSAGASDMSGWLLMGLPG) and 88 to 124 (INWKLVAGRLRVHTEYNNNALTLPDYFTGRFEDKSRI). Residues 42-62 (LGPFVTALSAGASDMSGWLLM) form a helical membrane-spanning segment. Residues 63–67 (GLPGA) are Periplasmic-facing. The chain crosses the membrane as a helical span at residues 68 to 88 (VFLSGISESWIAIGLTLGAWI). Residues 89-126 (NWKLVAGRLRVHTEYNNNALTLPDYFTGRFEDKSRILR) lie on the Cytoplasmic side of the membrane. Residues 127–147 (IISALVILLFFTIYCASGIVA) traverse the membrane as a helical segment. The Periplasmic segment spans residues 148-162 (GARLFESTFGMSYET). The interval 151-162 (LFESTFGMSYET) is hydrophilic. A helical membrane pass occupies residues 163-183 (ALWAGAAATILYTFIGGFLAV). Residues 184–192 (SWTDTVQAS) are Cytoplasmic-facing. A hydrophilic region spans residues 185 to 189 (WTDTV). A helical membrane pass occupies residues 193–213 (LMIFALILTPVIVIISVGGFG). Hydrophilic stretches follow at residues 214–231 (DSLEVIKQKSIENVDMLK), 249–274 (FGQPHILARFMAADSHHSIVHARRIS), and 296–319 (FNDHPALAGAVNQNAERVFIELAQ). The Periplasmic portion of the chain corresponds to 214–234 (DSLEVIKQKSIENVDMLKGLN). Residues 235–255 (FVAIISLMGWGLGYFGQPHIL) form a helical membrane-spanning segment. The Cytoplasmic portion of the chain corresponds to 256-275 (ARFMAADSHHSIVHARRISM). A helical membrane pass occupies residues 276–296 (TWMILCLAGAVAVGFFGIAYF). Over 297 to 319 (NDHPALAGAVNQNAERVFIELAQ) the chain is Periplasmic. Residues 320–340 (ILFNPWIAGILLSAILAAVMS) form a helical membrane-spanning segment. Residues 341 to 370 (TLSCQLLVCSSAITEDLYKAFLRKHASQKE) lie on the Cytoplasmic side of the membrane. Positions 341–370 (TLSCQLLVCSSAITEDLYKAFLRKHASQKE) are hydrophilic. A helical transmembrane segment spans residues 371–391 (LVWVGRVMVLVVALVAIALAA). The Periplasmic segment spans residues 392–397 (NPENRV). Positions 392–397 (NPENRV) are hydrophilic. The helical transmembrane segment at 398-418 (LGLVSYAWAGFGAAFGPVVLF) threads the bilayer. At 419–427 (SVMWSRMTR) the chain is on the cytoplasmic side. 2 hydrophilic regions span residues 424–430 (RMTRNGA) and 446–448 (QFG). 2 helical membrane passes run 428 to 448 (NGALAGMIIGALTVIVWKQFG) and 449 to 469 (WLGLYEIIPGFIFGSIGIVVF). The Cytoplasmic portion of the chain corresponds to 470–502 (SLLGKAPSAAMQKRFAEADAHYHSAPPSRLQES). The hydrophilic stretch occupies residues 476-502 (PSAAMQKRFAEADAHYHSAPPSRLQES).

The protein belongs to the sodium:solute symporter (SSF) (TC 2.A.21) family. As to quaternary structure, has been isolated from inner membrane preparations as a homodimer.

The protein localises to the cell inner membrane. The catalysed reaction is L-proline(in) + Na(+)(in) = L-proline(out) + Na(+)(out). With respect to regulation, activity is stimulated by phosphatidylethanolamine and phosphatidylglycerol, but not by phosphatidylcholine and cardiolipin. Proline uptake is inhibited by the sulfhydryl reagent N-ethylmaleimide (NEM). Proline, in the presence of Na(+) or Li(+), protects the carrier functions from NEM-inactivation. Its function is as follows. Catalyzes the sodium-dependent uptake of extracellular L-proline. This protein is also capable of using lithium as the transport cation. Also catalyzes the uptake of propionate. The chain is Sodium/proline symporter (putP) from Escherichia coli (strain K12).